The sequence spans 159 residues: Regulatory protein RecX (159 aa).

It belongs to the RecX family.

It localises to the cytoplasm. Modulates RecA activity. This is Regulatory protein RecX from Chlorobium limicola (strain DSM 245 / NBRC 103803 / 6330).